Reading from the N-terminus, the 300-residue chain is 33 kDa chaperonin (300 aa).

Cystine bridges form between C235–C237 and C269–C272.

It belongs to the HSP33 family. Under oxidizing conditions two disulfide bonds are formed involving the reactive cysteines. Under reducing conditions zinc is bound to the reactive cysteines and the protein is inactive.

The protein resides in the cytoplasm. Its function is as follows. Redox regulated molecular chaperone. Protects both thermally unfolding and oxidatively damaged proteins from irreversible aggregation. Plays an important role in the bacterial defense system toward oxidative stress. This is 33 kDa chaperonin from Pseudomonas fluorescens (strain Pf0-1).